A 185-amino-acid chain; its full sequence is Photosystem I assembly protein Ycf4 (185 aa).

Transmembrane regions (helical) follow at residues 20–40 (GNFF…SVGA) and 57–77 (ILFF…LFIS).

Belongs to the Ycf4 family.

It localises to the plastid. It is found in the chloroplast thylakoid membrane. Its function is as follows. Seems to be required for the assembly of the photosystem I complex. The protein is Photosystem I assembly protein Ycf4 of Agrostis stolonifera (Creeping bentgrass).